We begin with the raw amino-acid sequence, 509 residues long: Scavenger receptor class B member 1 (509 aa).

Over 1–11 (MGSRSRARQVA) the chain is Cytoplasmic. A helical transmembrane segment spans residues 12–32 (AALGFVGLLLAALGAVMIVMV). The Extracellular segment spans residues 33 to 439 (PSIIKQQVLK…FYTQLVLMPK (407 aa)). Residues Asn102, Asn108, Asn173, Asn212, Asn255, Asn310, Asn330, and Asn383 are each glycosylated (N-linked (GlcNAc...) asparagine). Residues Cys251 and Cys384 are joined by a disulfide bond. Residues 440–460 (VLHYAQYVLLALGCVLLFIPI) traverse the membrane as a helical segment. Topologically, residues 461–509 (VYQIRSQEKCYLFWSSSKKGSKDKEAIQAYSESLMTPAPKGTVLQEARL) are cytoplasmic.

Belongs to the CD36 family. The C-terminal region binds to PDZK1. In terms of processing, N-glycosylated. The six cysteines of the extracellular domain are all involved in intramolecular disulfide bonds.

The protein resides in the cell membrane. It is found in the membrane. The protein localises to the caveola. In terms of biological role, receptor for different ligands such as phospholipids, cholesterol ester, lipoproteins, phosphatidylserine and apoptotic cells. Receptor for HDL, mediating selective uptake of cholesteryl ether and HDL-dependent cholesterol efflux. Also facilitates the flux of free and esterified cholesterol between the cell surface and apoB-containing lipoproteins and modified lipoproteins, although less efficiently than HDL. May be involved in the phagocytosis of apoptotic cells, via its phosphatidylserine binding activity. This is Scavenger receptor class B member 1 (SCARB1) from Sus scrofa (Pig).